The primary structure comprises 384 residues: UPF0284 protein alr0297 (384 aa).

The protein belongs to the UPF0284 family.

The polypeptide is UPF0284 protein alr0297 (Nostoc sp. (strain PCC 7120 / SAG 25.82 / UTEX 2576)).